We begin with the raw amino-acid sequence, 274 residues long: Large ribosomal subunit protein uL2 (274 aa).

Positions 223 to 274 are disordered; it reads VAMNPVDHPHGGGEGRTGEGRHAVDPWGNLTKGYRTRNNKRTQSMIVSRRKK. Positions 229 to 246 are enriched in basic and acidic residues; it reads DHPHGGGEGRTGEGRHAV.

It belongs to the universal ribosomal protein uL2 family. In terms of assembly, part of the 50S ribosomal subunit. Forms a bridge to the 30S subunit in the 70S ribosome.

Its function is as follows. One of the primary rRNA binding proteins. Required for association of the 30S and 50S subunits to form the 70S ribosome, for tRNA binding and peptide bond formation. It has been suggested to have peptidyltransferase activity; this is somewhat controversial. Makes several contacts with the 16S rRNA in the 70S ribosome. The polypeptide is Large ribosomal subunit protein uL2 (Verminephrobacter eiseniae (strain EF01-2)).